The primary structure comprises 940 residues: Lon protease homolog 1, mitochondrial (940 aa).

Residues 1–61 (MLKLFTSSAS…AFFCSEPTNG (61 aa)) constitute a mitochondrion transit peptide. Positions 70 to 90 (KAVESDSEVSDSKSSSAIVPT) are disordered. Residue Ser74 is modified to Phosphoserine. Positions 100–309 (VLALPVPHRP…LTLELMKKEM (210 aa)) constitute a Lon N-terminal domain. 464–471 (GPPGVGKT) is a binding site for ATP. Residues 751-935 (QTPVGVVMGL…GKIFELAFGY (185 aa)) form the Lon proteolytic domain. Active-site residues include Ser841 and Lys884.

This sequence belongs to the peptidase S16 family. In terms of assembly, homohexamer or homoheptamer. Organized in a ring with a central cavity.

Its subcellular location is the mitochondrion matrix. The catalysed reaction is Hydrolysis of proteins in presence of ATP.. ATP-dependent serine protease that mediates the selective degradation of misfolded, unassembled or oxidatively damaged polypeptides as well as certain short-lived regulatory proteins in the mitochondrial matrix. May also have a chaperone function in the assembly of inner membrane protein complexes. Participates in the regulation of mitochondrial gene expression and in the maintenance of the integrity of the mitochondrial genome. Binds to mitochondrial DNA in a site-specific manner. This chain is Lon protease homolog 1, mitochondrial (LON1), found in Arabidopsis thaliana (Mouse-ear cress).